The chain runs to 185 residues: Adenine phosphoribosyltransferase (185 aa).

It belongs to the purine/pyrimidine phosphoribosyltransferase family. In terms of assembly, homodimer.

It is found in the cytoplasm. It catalyses the reaction AMP + diphosphate = 5-phospho-alpha-D-ribose 1-diphosphate + adenine. It functions in the pathway purine metabolism; AMP biosynthesis via salvage pathway; AMP from adenine: step 1/1. Functionally, catalyzes a salvage reaction resulting in the formation of AMP, that is energically less costly than de novo synthesis. The protein is Adenine phosphoribosyltransferase of Nocardioides sp. (strain ATCC BAA-499 / JS614).